Here is a 257-residue protein sequence, read N- to C-terminus: Thioredoxin-dependent peroxide reductase, mitochondrial (257 aa).

Residues 1-62 (MAATAGRLFR…FAFSTSSSYH (62 aa)) constitute a mitochondrion transit peptide. The Thioredoxin domain occupies 64-222 (PAVTQHAPYF…TLRLVKAFQF (159 aa)). Residue K84 is modified to N6-succinyllysine. N6-acetyllysine; alternate is present on K92. K92 carries the N6-succinyllysine; alternate modification. The active-site Cysteine sulfenic acid (-SOH) intermediate is C109. Residue T147 is modified to Phosphothreonine.

Belongs to the peroxiredoxin family. AhpC/Prx1 subfamily. As to quaternary structure, homodimer; disulfide-linked, upon oxidation. 6 homodimers assemble to form a ring-like dodecamer. Interacts with NEK6. Interacts with LRRK2. Interacts with MAP3K13. Interacts with RPS6KC1 (via PX domain). Phosphorylated by LRRK2; phosphorylation reduces perodixase activity. Post-translationally, the enzyme can be inactivated by further oxidation of the cysteine sulfenic acid (C(P)-SOH) to sulphinic acid (C(P)-SO2H) and sulphonic acid (C(P)-SO3H) instead of its condensation to a disulfide bond. In terms of processing, S-palmitoylated. As to expression, predominantly expressed in adrenal cortex. Also detected in liver, renal cortex and medulla, and adrenal medulla (at protein level).

It localises to the mitochondrion matrix. Its subcellular location is the cytoplasm. It is found in the early endosome. It catalyses the reaction a hydroperoxide + [thioredoxin]-dithiol = an alcohol + [thioredoxin]-disulfide + H2O. Functionally, thiol-specific peroxidase that catalyzes the reduction of hydrogen peroxide and organic hydroperoxides to water and alcohols, respectively. Plays a role in cell protection against oxidative stress by detoxifying peroxides. Acts synergistically with MAP3K13 to regulate the activation of NF-kappa-B in the cytosol. Required for the maintenance of physical strength. The sequence is that of Thioredoxin-dependent peroxide reductase, mitochondrial (PRDX3) from Bos taurus (Bovine).